We begin with the raw amino-acid sequence, 261 residues long: Small ribosomal subunit protein uS2 (261 aa).

N-acetylserine is present on serine 2. The segment at 211–261 (EQNAAEDSKAEDAEEAPVADAEPDWSGETEDVDWAESGATPAAEEAAASNW) is disordered. Positions 222–244 (DAEEAPVADAEPDWSGETEDVDW) are enriched in acidic residues. The segment covering 245–261 (AESGATPAAEEAAASNW) has biased composition (low complexity).

Belongs to the universal ribosomal protein uS2 family. In terms of assembly, component of the small ribosomal subunit. Mature ribosomes consist of a small (40S) and a large (60S) subunit. The 40S subunit contains about 33 different proteins and 1 molecule of RNA (18S). The 60S subunit contains about 49 different proteins and 3 molecules of RNA (25S, 5.8S and 5S). Interacts with RPS21.

Its subcellular location is the cytoplasm. Its function is as follows. Required for the assembly and/or stability of the 40S ribosomal subunit. Required for the processing of the 20S rRNA-precursor to mature 18S rRNA in a late step of the maturation of 40S ribosomal subunits. In Meyerozyma guilliermondii (strain ATCC 6260 / CBS 566 / DSM 6381 / JCM 1539 / NBRC 10279 / NRRL Y-324) (Yeast), this protein is Small ribosomal subunit protein uS2.